The primary structure comprises 236 residues: Ribosome maturation protein SDO1 homolog (236 aa).

Belongs to the SDO1/SBDS family. In terms of assembly, crystallized in association with 70S ribosomes.

The chain is Ribosome maturation protein SDO1 homolog from Thermococcus kodakarensis (strain ATCC BAA-918 / JCM 12380 / KOD1) (Pyrococcus kodakaraensis (strain KOD1)).